A 393-amino-acid polypeptide reads, in one-letter code: DNA primase large subunit PriL (393 aa).

Residues C230, C339, C350, and C356 each coordinate [4Fe-4S] cluster.

This sequence belongs to the eukaryotic-type primase large subunit family. Heterodimer of a small subunit (PriS) and a large subunit (PriL). The cofactor is [4Fe-4S] cluster.

Regulatory subunit of DNA primase, an RNA polymerase that catalyzes the synthesis of short RNA molecules used as primers for DNA polymerase during DNA replication. Stabilizes and modulates the activity of the small subunit, increasing the rate of DNA synthesis, and conferring RNA synthesis capability. The DNA polymerase activity may enable DNA primase to also catalyze primer extension after primer synthesis. May also play a role in DNA repair. Displays gap-filling and strand-displacement activities. This is DNA primase large subunit PriL from Pyrococcus abyssi (strain GE5 / Orsay).